Here is a 105-residue protein sequence, read N- to C-terminus: UPF0045 protein ECM15 (105 aa).

The protein belongs to the UPF0045 family.

The protein is UPF0045 protein ECM15 (ECM15) of Eremothecium gossypii (strain ATCC 10895 / CBS 109.51 / FGSC 9923 / NRRL Y-1056) (Yeast).